The sequence spans 139 residues: Small ribosomal subunit protein uS9 (139 aa).

It belongs to the universal ribosomal protein uS9 family.

In Coxiella burnetii (strain CbuK_Q154) (Coxiella burnetii (strain Q154)), this protein is Small ribosomal subunit protein uS9.